We begin with the raw amino-acid sequence, 143 residues long: uncharacterized protein (143 aa).

In terms of domain architecture, HTH cro/C1-type spans 24-78 (IRQRRRWQNMSQAALGEAIGVTFQQVQKYEKGSNRVGAGRLQQISDALEVHPSYF). The segment at residues 35 to 54 (QAALGEAIGVTFQQVQKYEK) is a DNA-binding region (H-T-H motif).

This is an uncharacterized protein from Sinorhizobium fredii (strain NBRC 101917 / NGR234).